The primary structure comprises 441 residues: MAVVPASLSGQDVGSFAYLTIKDRIPQILTKVIDTLHRHKSEFFEKHGEEGVEAEKKAISLLSKLRNELQTDKPFIPLVEKFVDTDIWNQYLEYQQSLLNESDGKSRWFYSPWLLVECYMYRRIHEAIIQSPPIDYFDVFKESKEQNFYGSQESIIALCTHLQQLIRTIEDLDENQLKDEFFKLLQISLWGNKCDLSLSGGESSSQNTNVLNSLEDLKPFILLNDMEHLWSLLSNCKKTREKASATRVYIVLDNSGFELVTDLILADFLLSSELATEVHFYGKTIPWFVSDTTIHDFNWLIEQVKHSNHKWMSKCGADWEEYIKMGKWVYHNHIFWTLPHEYCAMPQVAPDLYAELQKAHLILFKGDLNYRKLTGDRKWEFSVPFHQALNGFHPAPLCTIRTLKAEIQVGLQPGQGEQLLASEPSWWTTGKYGIFQYDGPL.

A2 is modified (N-acetylalanine). Position 40 is an N6-acetyllysine (K40). S102 carries the post-translational modification Phosphoserine. Mn(2+)-binding residues include D253 and N254. 253–254 (DN) is a substrate binding site. The S-adenosyl-L-methionine site is built by E258 and D291. D291 contributes to the Mn(2+) binding site. Substrate contacts are provided by residues 367 to 371 (DLNYR) and K404. Positions 401 to 404 (RTLK) match the Subfamily III RTxK motif motif.

Belongs to the damage-control phosphatase family. Sugar phosphate phosphatase III subfamily. Mn(2+) is required as a cofactor. The cofactor is Ni(2+). Post-translationally, automethylated.

The enzyme catalyses beta-D-fructose 1-phosphate + H2O = D-fructose + phosphate. It catalyses the reaction beta-D-fructose 6-phosphate = dihydroxyacetone + D-glyceraldehyde 3-phosphate. It carries out the reaction L-glutamyl-[protein] + S-adenosyl-L-methionine = [protein]-L-glutamate 5-O-methyl ester + S-adenosyl-L-homocysteine. Its function is as follows. Metal-dependent phosphatase that shows phosphatase activity against several substrates, including fructose-1-phosphate and fructose-6-phosphate. Its preference for fructose-1-phosphate, a strong glycating agent that causes DNA damage rather than a canonical yeast metabolite, suggests a damage-control function in hexose phosphate metabolism. Has also been shown to have O-methyltransferase activity that methylates glutamate residues of target proteins to form gamma-glutamyl methyl ester residues. Possibly methylates PCNA, suggesting it is involved in the DNA damage response. This is Damage-control phosphatase ARMT1 from Homo sapiens (Human).